Reading from the N-terminus, the 238-residue chain is Flagellar L-ring protein (238 aa).

The N-terminal stretch at 1–17 is a signal peptide; sequence MKRRLLAAGCAMLLLSG. C18 carries N-palmitoyl cysteine lipidation. C18 carries S-diacylglycerol cysteine lipidation. Positions 22–50 are disordered; that stretch reads RQQPSPVPPVTQPQAYAEPEDTAANPGSL.

The protein belongs to the FlgH family. As to quaternary structure, the basal body constitutes a major portion of the flagellar organelle and consists of four rings (L,P,S, and M) mounted on a central rod.

The protein resides in the cell outer membrane. The protein localises to the bacterial flagellum basal body. Assembles around the rod to form the L-ring and probably protects the motor/basal body from shearing forces during rotation. The polypeptide is Flagellar L-ring protein (Nitratidesulfovibrio vulgaris (strain DSM 19637 / Miyazaki F) (Desulfovibrio vulgaris)).